Here is a 475-residue protein sequence, read N- to C-terminus: UDP-N-acetylmuramate--L-alanine ligase (475 aa).

Residue 117-123 participates in ATP binding; that stretch reads GTHGKTT.

Belongs to the MurCDEF family.

It is found in the cytoplasm. It catalyses the reaction UDP-N-acetyl-alpha-D-muramate + L-alanine + ATP = UDP-N-acetyl-alpha-D-muramoyl-L-alanine + ADP + phosphate + H(+). It functions in the pathway cell wall biogenesis; peptidoglycan biosynthesis. Its function is as follows. Cell wall formation. This Chlorobaculum tepidum (strain ATCC 49652 / DSM 12025 / NBRC 103806 / TLS) (Chlorobium tepidum) protein is UDP-N-acetylmuramate--L-alanine ligase.